Reading from the N-terminus, the 152-residue chain is MALDKSVILLPLLVLVLLVLGCLGRESRAKKFQRQHMDSGSSPSSNSTYCNQMMKRRSMTHGRCKPVNTFVHEPLVDVQNVCFQEKVTCKNGQTNCFKSKSSMHITDCRLTNGSRYPNCAYRTSPKERRIIVACEGSPYVPVHFDASVEDST.

Residues 1 to 24 (MALDKSVILLPLLVLVLLVLGCLG) form the signal peptide. Substrate contacts are provided by K31 and R34. The Proton acceptor role is filled by H36. N46 carries N-linked (GlcNAc...) asparagine glycosylation. Cystine bridges form between C50/C108, C64/C119, C82/C134, and C89/C96. Substrate is bound by residues 65 to 69 (KPVNT), K90, and R109. N112 carries N-linked (GlcNAc...) asparagine glycosylation. The active-site Proton donor is the H143.

It belongs to the pancreatic ribonuclease family. Monomer. Interacts with and forms tight 1:1 complexes with RNH1. Dimerization of two such complexes may occur. Interaction with RNH1 inhibits this protein.

It localises to the secreted. It catalyses the reaction an [RNA] containing cytidine + H2O = an [RNA]-3'-cytidine-3'-phosphate + a 5'-hydroxy-ribonucleotide-3'-[RNA].. The enzyme catalyses an [RNA] containing uridine + H2O = an [RNA]-3'-uridine-3'-phosphate + a 5'-hydroxy-ribonucleotide-3'-[RNA].. Its function is as follows. Endonuclease that catalyzes the cleavage of RNA on the 3' side of pyrimidine nucleotides. Acts on single-stranded and double-stranded RNA. This is Ribonuclease pancreatic (RNASE1) from Papio hamadryas (Hamadryas baboon).